The primary structure comprises 83 residues: Small ribosomal subunit protein uS17 (83 aa).

This sequence belongs to the universal ribosomal protein uS17 family. As to quaternary structure, part of the 30S ribosomal subunit.

One of the primary rRNA binding proteins, it binds specifically to the 5'-end of 16S ribosomal RNA. The chain is Small ribosomal subunit protein uS17 from Francisella tularensis subsp. holarctica (strain FTNF002-00 / FTA).